The sequence spans 656 residues: MQTPLIDLRAIRKSYGGGDSPLVNVLRGIDLSIHAGEFVAIVGASGSGKSTLMNILGCLDRPTSGEYLFAGENVAELGSDELAWLRREAFGFVFQGYHLIPSGSAQENVEMPAIYAGTPAAERHARAAALLDRLGLGSRTGNRPHQLSGGQQQRVSIARALMNGGHIILADEPTGALDSHSGAEVMALLDELASQGHVVILITHDREVAARAKRVIEISDGLVVSDTACDLSAPRSANPAALQAVDLRKRLSEGSGSRGAWKGELLDAVQAAWRVMWINRFRTALTLLGIVIGVASVVVMLAVGEGSKRQVMAQMSSFGSNIIYLNGKAPNPRAPKGIITLDEVAALGELPEVKMIMPVNGGQAGVRYGNVDHSSYVGGNDTHFPAIFNWPVVEGSYFSEADEQSAAAVAVIGYKVRQKLFGEHTDPIGQYILIENVPFQVVGVLEEKGATSGDLDSDNRIAIPYSAASIRLFGSQDPEYITIATRDANNVKHAEEAIRNLLQRLHNGKQDYELTNNAAMIQAEARTQNTLSLMLGSIAAISLLVGGIGVMNIMLMTVRERTREIGIRMATGARQSDILRQFLTEAVMLSVVGGLAGVVLALGMGAALLLSKVAVAFTVPAVAGAFACALVTGVIFGFMPARKAARLDPVAALTSE.

The region spanning 6 to 245 (IDLRAIRKSY…SANPAALQAV (240 aa)) is the ABC transporter domain. ATP is bound at residue 43 to 50 (GASGSGKS). Transmembrane regions (helical) follow at residues 284–304 (ALTL…LAVG), 538–558 (IAAI…LMTV), 589–609 (LSVV…AALL), and 619–639 (VPAV…FGFM).

The protein belongs to the ABC transporter superfamily. Macrolide exporter (TC 3.A.1.122) family. Part of the tripartite efflux system PvdRT-OpmQ, which is composed of an inner membrane component with both ATPase and permease domains, PvdT, a periplasmic membrane fusion protein, PvdR, and an outer membrane component, OpmQ.

The protein resides in the cell inner membrane. Functionally, part of the tripartite efflux system PvdRT-OpmQ required for the secretion into the extracellular milieu of the siderophore pyoverdine (PVD), which is involved in iron acquisition. This subunit binds PVD and drives its secretion by hydrolyzing ATP. The system is responsible for export of newly synthesized PVD after the final steps of biosynthesis have taken place in the periplasm. It is also responsible for recycling of PVD after internalization of ferri-PVD into the periplasm by the outer-membrane receptor FpvA and release of iron from PVD, thus making PVD available for new cycles of iron uptake. The chain is Pyoverdine export ATP-binding/permease protein PvdT from Pseudomonas savastanoi pv. phaseolicola (strain 1448A / Race 6) (Pseudomonas syringae pv. phaseolicola (strain 1448A / Race 6)).